Here is a 298-residue protein sequence, read N- to C-terminus: Bifunctional protein FolD (298 aa).

NADP(+) contacts are provided by residues 165-167 (GRS), S190, and I231.

It belongs to the tetrahydrofolate dehydrogenase/cyclohydrolase family. Homodimer.

It catalyses the reaction (6R)-5,10-methylene-5,6,7,8-tetrahydrofolate + NADP(+) = (6R)-5,10-methenyltetrahydrofolate + NADPH. It carries out the reaction (6R)-5,10-methenyltetrahydrofolate + H2O = (6R)-10-formyltetrahydrofolate + H(+). Its pathway is one-carbon metabolism; tetrahydrofolate interconversion. Its function is as follows. Catalyzes the oxidation of 5,10-methylenetetrahydrofolate to 5,10-methenyltetrahydrofolate and then the hydrolysis of 5,10-methenyltetrahydrofolate to 10-formyltetrahydrofolate. The chain is Bifunctional protein FolD from Prochlorococcus marinus (strain AS9601).